The primary structure comprises 194 residues: Adenylate kinase (194 aa).

Position 11-16 (11-16 (GSGKGT)) interacts with ATP. The interval 31–60 (STGELLRAEIKAQTELGQAAAGYINEGHLV) is NMP. Residues Thr32, Arg37, 58-60 (HLV), 86-89 (GFPR), and Gln93 contribute to the AMP site. Positions 127–137 (NRGKISGRSDD) are LID. Arg128 is a binding site for ATP. Residues Arg134 and Arg145 each coordinate AMP. Gly173 contacts ATP.

It belongs to the adenylate kinase family. In terms of assembly, monomer.

It is found in the cytoplasm. It catalyses the reaction AMP + ATP = 2 ADP. The protein operates within purine metabolism; AMP biosynthesis via salvage pathway; AMP from ADP: step 1/1. Functionally, catalyzes the reversible transfer of the terminal phosphate group between ATP and AMP. Plays an important role in cellular energy homeostasis and in adenine nucleotide metabolism. This chain is Adenylate kinase, found in Porphyromonas gingivalis (strain ATCC 33277 / DSM 20709 / CIP 103683 / JCM 12257 / NCTC 11834 / 2561).